The following is a 468-amino-acid chain: Acid phosphatase PHO1 (468 aa).

Residues 1–22 (MFSPILSLEIILALATLQSVFA) form the signal peptide. Histidine 84 functions as the Nucleophile in the catalytic mechanism. 4 N-linked (GlcNAc...) asparagine glycosylation sites follow: asparagine 163, asparagine 196, asparagine 256, and asparagine 321. Aspartate 346 (proton donor) is an active-site residue. N-linked (GlcNAc...) asparagine glycans are attached at residues asparagine 360 and asparagine 453.

This sequence belongs to the histidine acid phosphatase family.

The catalysed reaction is a phosphate monoester + H2O = an alcohol + phosphate. The chain is Acid phosphatase PHO1 (PHO1) from Komagataella pastoris (Yeast).